The chain runs to 556 residues: DNA ligase (556 aa).

Glu245 contacts ATP. The active-site N6-AMP-lysine intermediate is the Lys247. ATP is bound by residues Arg252, Arg267, Glu296, Phe336, Arg408, and Lys414.

It belongs to the ATP-dependent DNA ligase family. Mg(2+) serves as cofactor.

The enzyme catalyses ATP + (deoxyribonucleotide)n-3'-hydroxyl + 5'-phospho-(deoxyribonucleotide)m = (deoxyribonucleotide)n+m + AMP + diphosphate.. Its function is as follows. DNA ligase that seals nicks in double-stranded DNA during DNA replication, DNA recombination and DNA repair. The polypeptide is DNA ligase (Methanosphaerula palustris (strain ATCC BAA-1556 / DSM 19958 / E1-9c)).